Consider the following 323-residue polypeptide: Coiled-coil domain-containing protein 160 (323 aa).

Residues 143 to 290 (SKLRLNLLNE…IKNELRTEKS (148 aa)) are a coiled coil.

Belongs to the CCDC160 family.

In Bos taurus (Bovine), this protein is Coiled-coil domain-containing protein 160 (CCDC160).